The sequence spans 554 residues: MASPPAHRSSKAADEELPKASSTFHPSLWGSFFLTYQPPTAPQRANMKERAEVLRERVRKVLKGSTTDQLPETVNLILTLQRLGLGYYYENEIDKLLHQIYSNSDYNEKDLNLVSQRFYLLRKNGYDVPSDVFLNFKTEEGGFACAAADTRSLLSLYNAAYLRKHGEEVLDEAISSTRLRLQDLLGRLLPESPFAKEVSSSLRTPLFRRVGILEARNYIPIYEKEATRNEAVLELAKLNFNLQQLDFCEELKHCSAWWNEMIAKSKLTFVRDRIVEEYFWMNGACCDPPYSLSRIILTKITGLITIIDDMFDTHGTTEDCMKFAEAFGRWDESAIHLLPEYMKDFYILMLETFQSFEDALGPEKSYRVLYLKQAMERLVELYSKEIKWRDQDYVATMSEHLQVSAESIGANALTCSAYAGMGDMSITKETFEWALSFPQFIRTFGSFVRLSNDVVSTKREQTKDHSPSTVHCYMKEHGTTMDDACEKIKELIEDSWKDMLEQSLALKGLPKVVPQLVFDFSRTTDNMYRDRDALTSSEALKEMIQLLFVEPIPE.

Residues D308 and D312 each contribute to the Mg(2+) site. Substrate-binding residues include D308 and D312. A DDXXD motif motif is present at residues 308 to 312; that stretch reads DDMFD. Residues 407–411 are determine the stereoselectivity of the enzyme; the sequence is SIGAN. Substrate contacts are provided by R449 and N452. Mg(2+)-binding residues include N452, S456, and E460.

Belongs to the terpene synthase family. In terms of assembly, monomer. Mg(2+) is required as a cofactor. Requires Mn(2+) as cofactor. As to expression, highly expressed in the husk. Detected in leaves.

It is found in the cytoplasm. The enzyme catalyses (2E,6E)-farnesyl diphosphate = sesquithujene + diphosphate. It catalyses the reaction (2Z,6Z)-farnesyl diphosphate = (1S,5S,6S)-alpha-bergamotene + diphosphate. It carries out the reaction (2E,6E)-farnesyl diphosphate = (E)-beta-farnesene + diphosphate. The catalysed reaction is (2E,6E)-farnesyl diphosphate = (S)-beta-bisabolene + diphosphate. The enzyme catalyses (2Z,6E)-farnesyl diphosphate = (-)-beta-curcumene + diphosphate. It catalyses the reaction (2E,6E)-farnesyl diphosphate = gamma-curcumene + diphosphate. It carries out the reaction (2E,6E)-farnesyl diphosphate = sesquisabinene B + diphosphate. It functions in the pathway secondary metabolite biosynthesis; terpenoid biosynthesis. Functionally, sesquiterpene synthase involved in the production after herbivore attack of a blend of volatiles that attracts natural enemies of herbivores. Converts farnesyl diphosphate to sesquithujene, (S)-beta-bisabolene, (Z)-alpha-bergamotene, sesquisabinene B and several minor products. Can also act in vitro as a monoterpene synthase, converting geranyl diphosphate to (S)-(-)-limonene, beta-myrcene and 11 other monoterpenes. This Zea mays (Maize) protein is Sesquithujene synthase A.